The primary structure comprises 330 residues: GMP reductase (330 aa).

The active-site Thioimidate intermediate is cysteine 180. NADP(+) is bound at residue leucine 209–valine 232.

Belongs to the IMPDH/GMPR family. GuaC type 2 subfamily.

It catalyses the reaction IMP + NH4(+) + NADP(+) = GMP + NADPH + 2 H(+). Catalyzes the irreversible NADPH-dependent deamination of GMP to IMP. It functions in the conversion of nucleobase, nucleoside and nucleotide derivatives of G to A nucleotides, and in maintaining the intracellular balance of A and G nucleotides. The polypeptide is GMP reductase (Lactobacillus gasseri (strain ATCC 33323 / DSM 20243 / BCRC 14619 / CIP 102991 / JCM 1131 / KCTC 3163 / NCIMB 11718 / NCTC 13722 / AM63)).